We begin with the raw amino-acid sequence, 452 residues long: Cobyrinate a,c-diamide synthase (452 aa).

One can recognise a GATase cobBQ-type domain in the interval 244–437 (KIAYAYDEAF…VHINLYTYKE (194 aa)). C327 (nucleophile) is an active-site residue.

Belongs to the CobB/CbiA family. Requires Mg(2+) as cofactor.

The enzyme catalyses cob(II)yrinate + 2 L-glutamine + 2 ATP + 2 H2O = cob(II)yrinate a,c diamide + 2 L-glutamate + 2 ADP + 2 phosphate + 2 H(+). It participates in cofactor biosynthesis; adenosylcobalamin biosynthesis; cob(II)yrinate a,c-diamide from sirohydrochlorin (anaerobic route): step 10/10. Functionally, catalyzes the ATP-dependent amidation of the two carboxylate groups at positions a and c of cobyrinate, using either L-glutamine or ammonia as the nitrogen source. This chain is Cobyrinate a,c-diamide synthase, found in Caldanaerobacter subterraneus subsp. tengcongensis (strain DSM 15242 / JCM 11007 / NBRC 100824 / MB4) (Thermoanaerobacter tengcongensis).